The sequence spans 322 residues: MLQGHERSITQIKYNREGDLLFSCSKDQKPNVWYSLNGERLGTYDGHQGAVWCLDVDWETRKLITGAGDMTTKIWDVEYGTVIASIAAKSSVRTCNFSFSGNQAAYSTDKAMGQNCELFIIDVRNADSSLSEQAPTLRIPMVESKITSMLWGPLDETIITGHDNGNIAIWDIRKGQKVVDSGSDHTAGINDMQLSKDGTMFVTASKDTTAKLFDSESLMCLKTYKTERPVNSAAISPILDHVVLGGGQDAMEVTTTSTKAGKFDSRFFHLIYEEEFARLKGHFGPINSLAFHPDGKSYASGGEDGFVRVQTFDSTYFENIFE.

5 WD repeats span residues 4–43, 46–85, 141–180, 184–223, and 281–322; these read GHERSITQIKYNREGDLLFSCSKDQKPNVWYSLNGERLGT, GHQGAVWCLDVDWETRKLITGAGDMTTKIWDVEYGTVIAS, MVESKITSMLWGPLDETIITGHDNGNIAIWDIRKGQKVVD, DHTAGINDMQLSKDGTMFVTASKDTTAKLFDSESLMCLKT, and GHFG…NIFE.

The protein belongs to the eIF-3 subunit I family. In terms of assembly, component of the eukaryotic translation initiation factor 3 (eIF-3) complex. The eIF-3 complex interacts with pix.

Its subcellular location is the cytoplasm. In terms of biological role, component of the eukaryotic translation initiation factor 3 (eIF-3) complex, which is involved in protein synthesis of a specialized repertoire of mRNAs and, together with other initiation factors, stimulates binding of mRNA and methionyl-tRNAi to the 40S ribosome. The eIF-3 complex specifically targets and initiates translation of a subset of mRNAs involved in cell proliferation. This chain is Eukaryotic translation initiation factor 3 subunit I, found in Drosophila mojavensis (Fruit fly).